Consider the following 599-residue polypeptide: Fructan 1-exohydrolase (599 aa).

Residues 1 to 16 (MAQAWAFLLLPALALA) form the signal peptide. The active site involves Asp-78. N-linked (GlcNAc...) asparagine glycosylation is found at Asn-171, Asn-239, and Asn-251. Cys-449 and Cys-495 are oxidised to a cystine.

This sequence belongs to the glycosyl hydrolase 32 family.

It catalyses the reaction Hydrolysis of terminal, non-reducing (2-&gt;1)-linked beta-D-fructofuranose residues in fructans.. With respect to regulation, inhibited by sucrose. Hydrolyzes inulin-type beta-(2,1)-fructans. May play a role as a beta-(2,1)-trimmer during graminan biosynthesis. The sequence is that of Fructan 1-exohydrolase from Hordeum vulgare (Barley).